The primary structure comprises 464 residues: Asparagine--tRNA ligase (464 aa).

Belongs to the class-II aminoacyl-tRNA synthetase family. As to quaternary structure, homodimer.

The protein localises to the cytoplasm. The enzyme catalyses tRNA(Asn) + L-asparagine + ATP = L-asparaginyl-tRNA(Asn) + AMP + diphosphate + H(+). The protein is Asparagine--tRNA ligase of Xanthomonas axonopodis pv. citri (strain 306).